A 121-amino-acid chain; its full sequence is Large ribosomal subunit protein uL14 (121 aa).

Belongs to the universal ribosomal protein uL14 family. As to quaternary structure, part of the 50S ribosomal subunit. Forms a cluster with proteins L3 and L19. In the 70S ribosome, L14 and L19 interact and together make contacts with the 16S rRNA in bridges B5 and B8.

Functionally, binds to 23S rRNA. Forms part of two intersubunit bridges in the 70S ribosome. The protein is Large ribosomal subunit protein uL14 of Prochlorococcus marinus (strain SARG / CCMP1375 / SS120).